The primary structure comprises 289 residues: Acetyl-coenzyme A carboxylase carboxyl transferase subunit beta 2 (289 aa).

One can recognise a CoA carboxyltransferase N-terminal domain in the interval 25–289; the sequence is VWTKCPSCDQ…TNTSIRLEVK (265 aa). 4 residues coordinate Zn(2+): Cys-29, Cys-32, Cys-48, and Cys-51. Residues 29–51 form a C4-type zinc finger; the sequence is CPSCDQVLYRIALKENLEVCPKC.

This sequence belongs to the AccD/PCCB family. As to quaternary structure, acetyl-CoA carboxylase is a heterohexamer composed of biotin carboxyl carrier protein (AccB), biotin carboxylase (AccC) and two subunits each of ACCase subunit alpha (AccA) and ACCase subunit beta (AccD). The cofactor is Zn(2+).

It localises to the cytoplasm. It catalyses the reaction N(6)-carboxybiotinyl-L-lysyl-[protein] + acetyl-CoA = N(6)-biotinyl-L-lysyl-[protein] + malonyl-CoA. It functions in the pathway lipid metabolism; malonyl-CoA biosynthesis; malonyl-CoA from acetyl-CoA: step 1/1. Functionally, component of the acetyl coenzyme A carboxylase (ACC) complex. Biotin carboxylase (BC) catalyzes the carboxylation of biotin on its carrier protein (BCCP) and then the CO(2) group is transferred by the transcarboxylase to acetyl-CoA to form malonyl-CoA. This chain is Acetyl-coenzyme A carboxylase carboxyl transferase subunit beta 2, found in Vibrio parahaemolyticus serotype O3:K6 (strain RIMD 2210633).